Consider the following 2099-residue polypeptide: Dedicator of cytokinesis protein 8 (2099 aa).

S20, S139, and S451 each carry phosphoserine. Residues 560 to 729 (RNLLYVYPQR…GVFNIEVQAV (170 aa)) enclose the C2 DOCK-type domain. Residues S904, S936, S1145, and S1243 each carry the phosphoserine modification. Positions 1632–2066 (KSYQASPDLR…LRPMIERKIP (435 aa)) constitute a DOCKER domain. S2087 is subject to Phosphoserine.

The protein belongs to the DOCK family. In terms of assembly, interacts (via DOCKER domain) with GTPase CDC42; the interaction activates CDC42 by exchanging GDP for GTP. The unphosphorylated form interacts (via DOCKER domain) with LRCH1 (via LRR repeats); the interaction prevents the association between DOCK8 and CDC42. Interacts with CCDC88B. In response to chemokine CXCL12/SDF-1-alpha stimulation, phosphorylated by PRKCA/PKC-alpha which promotes DOCK8 dissociation from LRCH1. In terms of tissue distribution, expressed in peripheral blood mononuclear cells (PBMCs).

It is found in the cytoplasm. The protein localises to the cell membrane. Its subcellular location is the cell projection. It localises to the lamellipodium membrane. Functionally, guanine nucleotide exchange factor (GEF) which specifically activates small GTPase CDC42 by exchanging bound GDP for free GTP. During immune responses, required for interstitial dendritic cell (DC) migration by locally activating CDC42 at the leading edge membrane of DC. Required for CD4(+) T-cell migration in response to chemokine stimulation by promoting CDC42 activation at T cell leading edge membrane. Is involved in NK cell cytotoxicity by controlling polarization of microtubule-organizing center (MTOC), and possibly regulating CCDC88B-mediated lytic granule transport to MTOC during cell killing. The polypeptide is Dedicator of cytokinesis protein 8 (DOCK8) (Homo sapiens (Human)).